The sequence spans 78 residues: Large ribosomal subunit protein bL28 (78 aa).

This sequence belongs to the bacterial ribosomal protein bL28 family.

The chain is Large ribosomal subunit protein bL28 from Trichodesmium erythraeum (strain IMS101).